The chain runs to 500 residues: Putative beta-lactamase-like 1 (500 aa).

This sequence belongs to the beta-lactamase family.

This is Putative beta-lactamase-like 1 (LACTBL1) from Homo sapiens (Human).